The chain runs to 162 residues: Probable tRNA (guanine(10)-N2)-dimethyltransferase (162 aa).

This sequence belongs to the methyltransferase superfamily. Trm-G10 family. In terms of assembly, monomer.

The protein localises to the cytoplasm. It catalyses the reaction guanosine(10) in tRNA + 2 S-adenosyl-L-methionine = N(2)-dimethylguanosine(10) in tRNA + 2 S-adenosyl-L-homocysteine + 2 H(+). Catalyzes the adenosylmethionine-dependent methylation of the exocyclic amino group (N(2)) of guanosine at position 10 of various tRNAs. Acts via a two-step process that leads to the formation of either N(2)-monomethyl (m(2)G) or N(2)-dimethylguanosine (m(2)(2)G). This is Probable tRNA (guanine(10)-N2)-dimethyltransferase (trmG10) from Methanothermococcus thermolithotrophicus (Methanococcus thermolithotrophicus).